The sequence spans 66 residues: M-poneratoxin-Dq3a (66 aa).

Positions M1–A23 are cleaved as a signal peptide. Positions E24–A43 are excised as a propeptide.

It belongs to the non-disulfide-bridged peptide (NDBP) superfamily. Medium-length antimicrobial peptide (group 3) family. Ponericin-W subfamily. As to expression, expressed by the venom gland.

The protein resides in the secreted. The protein localises to the target cell membrane. Functionally, may have antimicrobial properties by disrupting the integrity of the bacterial cell membrane. In addition, when tested in vitro on the parasite Trypanosoma cruzi (responsible of the Chagas disease), is able to potently reduce the number of the three forms (epimastigote, trypomastigote and amastigote) by inducing cell death through necrosis. Its function is as follows. May have antimicrobial properties by disrupting the integrity of the bacterial cell membrane. In addition, when tested in vitro on the parasite Trypanosoma cruzi (responsible of the Chagas disease), is able to moderately reduce the number of the forms epimastigote and trypomastigote. Its activity on the amastigote form has not been tested. In terms of biological role, may have antimicrobial properties by disrupting the integrity of the bacterial cell membrane. In addition, when tested in vitro on the parasite Trypanosoma cruzi (responsible of the Chagas disease), shows only a weak reduction of the number of the trypomastigote forms. Has no activity on the epimastigote forms. Its activity on the amastigote form has not been tested. The protein is M-poneratoxin-Dq3a of Dinoponera quadriceps (South American ant).